The primary structure comprises 455 residues: Probable glucarate dehydratase (455 aa).

Substrate contacts are provided by His-42, Thr-113, Tyr-160, and Lys-215. Lys-217 serves as the catalytic Proton acceptor. Mg(2+)-binding residues include Asp-245, Glu-276, and Asn-299. Asp-245–Asn-247 is a binding site for substrate. Substrate contacts are provided by residues Asn-299, His-349–Asn-351, His-378, and Arg-431. His-349 (proton acceptor) is an active-site residue.

The protein belongs to the mandelate racemase/muconate lactonizing enzyme family. GlucD subfamily. Requires Mg(2+) as cofactor.

The enzyme catalyses D-glucarate = 5-dehydro-4-deoxy-D-glucarate + H2O. The protein operates within carbohydrate acid metabolism; D-glucarate degradation; 2,5-dioxopentanoate from D-glucarate: step 1/2. Its function is as follows. Catalyzes the dehydration of glucarate to 5-keto-4-deoxy-D-glucarate (5-kdGluc). The polypeptide is Probable glucarate dehydratase (gudD) (Bacillus subtilis (strain 168)).